A 22-amino-acid chain; its full sequence is GAYGQGQNIGQLFVNILIFLFY.

Belongs to the tyrosinase family. Hemocyanin subfamily. Hemolymph.

The protein localises to the secreted. The protein resides in the extracellular space. Its function is as follows. Hemocyanins are copper-containing oxygen carriers occurring freely dissolved in the hemolymph of many mollusks and arthropods. The polypeptide is Hemocyanin subunit 4 (Homarus americanus (American lobster)).